The chain runs to 415 residues: Citrate (Re)-synthase (415 aa).

A Pyruvate carboxyltransferase domain is found at 4–275 (IFIIDVTNRD…GHEVDLSKAW (272 aa)).

The protein belongs to the alpha-IPM synthase/homocitrate synthase family. Requires Mn(2+) as cofactor.

It carries out the reaction oxaloacetate + acetyl-CoA + H2O = citrate + CoA + H(+). With respect to regulation, inhibited by citrate and under aerobic conditions. Its function is as follows. Catalyzes the condensation of the acetyl group of acetyl coenzyme A (acetyl-CoA) with oxaloacetate to form citrate. This enzyme is highly Re-face stereospecific with respect to the C-2 of oxaloacetate. This Dehalococcoides mccartyi (strain CBDB1) protein is Citrate (Re)-synthase.